We begin with the raw amino-acid sequence, 310 residues long: Protein YIP5 (310 aa).

The interval Met1 to Leu84 is disordered. Over residues Asp10–Gly22 the composition is skewed to acidic residues. The span at Asp35–Lys57 shows a compositional bias: polar residues. Position 60 is a phosphoserine (Ser60). The next 5 membrane-spanning stretches (helical) occupy residues Thr131–Ser151, Leu181–Val201, Leu220–Ile240, Thr249–Leu269, and Ser290–Phe310.

It belongs to the YIP1 family. Interacts with SNX3, TVP18, TVP23, YIP1 and YIP4. Interacts with SEC4; The C-terminal cysteines in the Rab GTPase SEC4 are essential for the interaction. Interacts with YPT1, YPT6, YPT7, YPT10, YPT11, YPT31, YPT32 and YPT52; These proteins are all Rab GTPases.

Its subcellular location is the membrane. Possible role in vesicle-mediated transport. May be involved in proper membrane localization of Rab GTPases. This chain is Protein YIP5 (YIP5), found in Saccharomyces cerevisiae (strain ATCC 204508 / S288c) (Baker's yeast).